The chain runs to 483 residues: Regulatory protein ViaA (483 aa).

This sequence belongs to the ViaA family. As to quaternary structure, homodimer. Interacts with RavA.

The protein localises to the cytoplasm. Component of the RavA-ViaA chaperone complex, which may act on the membrane to optimize the function of some of the respiratory chains. ViaA stimulates the ATPase activity of RavA. The chain is Regulatory protein ViaA from Cronobacter sakazakii (strain ATCC BAA-894) (Enterobacter sakazakii).